Consider the following 122-residue polypeptide: Large ribosomal subunit protein uL14 (122 aa).

This sequence belongs to the universal ribosomal protein uL14 family. In terms of assembly, part of the 50S ribosomal subunit. Forms a cluster with proteins L3 and L19. In the 70S ribosome, L14 and L19 interact and together make contacts with the 16S rRNA in bridges B5 and B8.

Functionally, binds to 23S rRNA. Forms part of two intersubunit bridges in the 70S ribosome. This is Large ribosomal subunit protein uL14 from Listeria monocytogenes serotype 4b (strain CLIP80459).